We begin with the raw amino-acid sequence, 602 residues long: Prostaglandin G/H synthase 1 (602 aa).

The N-terminal stretch at 1–26 (MSRRSLSLQFPLLLLLLLLPPPPVLL) is a signal peptide. One can recognise an EGF-like domain in the interval 34 to 72 (PVNPCCYYPCQNQGVCVRFGLDHYQCDCTRTGYSGPNCT). 4 cysteine pairs are disulfide-bonded: C38/C49, C39/C161, C43/C59, and C61/C71. N-linked (GlcNAc...) asparagine glycans are attached at residues N70, N106, and N146. The active-site Proton acceptor is the H209. The active-site For cyclooxygenase activity is the Y387. Residue H390 participates in heme b binding. N-linked (GlcNAc...) asparagine glycosylation occurs at N412. C571 and C577 are disulfide-bonded.

Belongs to the prostaglandin G/H synthase family. As to quaternary structure, homodimer. The cofactor is heme b.

Its subcellular location is the microsome membrane. The protein resides in the endoplasmic reticulum membrane. The enzyme catalyses (5Z,8Z,11Z,14Z)-eicosatetraenoate + AH2 + 2 O2 = prostaglandin H2 + A + H2O. It catalyses the reaction (5Z,8Z,11Z,14Z)-eicosatetraenoate + 2 O2 = prostaglandin G2. It carries out the reaction prostaglandin G2 + AH2 = prostaglandin H2 + A + H2O. The catalysed reaction is (9Z,12Z)-octadecadienoate + AH2 + O2 = (9R)-hydroxy-(10E,12Z)-octadecadienoate + A + H2O. The enzyme catalyses (9Z,12Z)-octadecadienoate + AH2 + O2 = (9S)-hydroxy-(10E,12Z)-octadecadienoate + A + H2O. It catalyses the reaction (9Z,12Z)-octadecadienoate + AH2 + O2 = (13S)-hydroxy-(9Z,11E)-octadecadienoate + A + H2O. It carries out the reaction (9Z,12Z)-octadecadienoate + AH2 + O2 = (13R)-hydroxy-(9Z,11E)-octadecadienoate + A + H2O. The protein operates within lipid metabolism; prostaglandin biosynthesis. The cyclooxygenase activity is inhibited by nonsteroidal anti-inflammatory drugs (NSAIDs) including ibuprofen, flurbiprofen, ketoprofen, naproxen, flurbiprofen, anirolac, fenclofenac and diclofenac. Functionally, dual cyclooxygenase and peroxidase that plays an important role in the biosynthesis pathway of prostanoids, a class of C20 oxylipins mainly derived from arachidonate ((5Z,8Z,11Z,14Z)-eicosatetraenoate, AA, C20:4(n-6)), with a particular role in the inflammatory response. The cyclooxygenase activity oxygenates AA to the hydroperoxy endoperoxide prostaglandin G2 (PGG2), and the peroxidase activity reduces PGG2 to the hydroxy endoperoxide prostaglandin H2 (PGH2), the precursor of all 2-series prostaglandins and thromboxanes. This complex transformation is initiated by abstraction of hydrogen at carbon 13 (with S-stereochemistry), followed by insertion of molecular O2 to form the endoperoxide bridge between carbon 9 and 11 that defines prostaglandins. The insertion of a second molecule of O2 (bis-oxygenase activity) yields a hydroperoxy group in PGG2 that is then reduced to PGH2 by two electrons. Involved in the constitutive production of prostanoids in particular in the stomach and platelets. In gastric epithelial cells, it is a key step in the generation of prostaglandins, such as prostaglandin E2 (PGE2), which plays an important role in cytoprotection. In platelets, it is involved in the generation of thromboxane A2 (TXA2), which promotes platelet activation and aggregation, vasoconstriction and proliferation of vascular smooth muscle cells. Can also use linoleate (LA, (9Z,12Z)-octadecadienoate, C18:2(n-6)) as substrate and produce hydroxyoctadecadienoates (HODEs) in a regio- and stereospecific manner, being (9R)-HODE ((9R)-hydroxy-(10E,12Z)-octadecadienoate) and (13S)-HODE ((13S)-hydroxy-(9Z,11E)-octadecadienoate) its major products. This chain is Prostaglandin G/H synthase 1, found in Rattus norvegicus (Rat).